Consider the following 231-residue polypeptide: eRF1 methyltransferase catalytic subunit mtq2 (231 aa).

S-adenosyl-L-methionine-binding positions include 54–58 (GCGSG), Asp80, and Asn130. 130-133 (NPPY) serves as a coordination point for substrate.

It belongs to the eukaryotic/archaeal PrmC-related family. As to quaternary structure, heterodimer of mtq2-trm112. mtq2 is the catalytic subunit carrying the catalytic and the S-adenosyl L-methionine binding sites.

The protein resides in the cytoplasm. It is found in the nucleus. The enzyme catalyses L-glutaminyl-[peptide chain release factor] + S-adenosyl-L-methionine = N(5)-methyl-L-glutaminyl-[peptide chain release factor] + S-adenosyl-L-homocysteine + H(+). Functionally, methylates eRF1 on 'Gln-182' using S-adenosyl L-methionine as methyl donor. eRF1 needs to be complexed to eRF3 in its GTP-bound form to be efficiently methylated. In Schizosaccharomyces pombe (strain 972 / ATCC 24843) (Fission yeast), this protein is eRF1 methyltransferase catalytic subunit mtq2 (mtq2).